We begin with the raw amino-acid sequence, 372 residues long: GTPase Obg (372 aa).

An Obg domain is found at 1–159 (MKFIDEARIE…RMLKLELKVL (159 aa)). The interval 128 to 147 (LHFKSSTNRAPRQKTDGKPG) is disordered. The OBG-type G domain occupies 160–334 (ADVGLLGMPN…LVYAIHDYLV (175 aa)). GTP contacts are provided by residues 166–173 (GMPNAGKS), 191–195 (FTTLA), 213–216 (DIPG), 284–287 (NKLD), and 315–317 (SAL). Mg(2+) is bound by residues Ser-173 and Thr-193.

This sequence belongs to the TRAFAC class OBG-HflX-like GTPase superfamily. OBG GTPase family. As to quaternary structure, monomer. Mg(2+) serves as cofactor.

The protein localises to the cytoplasm. In terms of biological role, an essential GTPase which binds GTP, GDP and possibly (p)ppGpp with moderate affinity, with high nucleotide exchange rates and a fairly low GTP hydrolysis rate. Plays a role in control of the cell cycle, stress response, ribosome biogenesis and in those bacteria that undergo differentiation, in morphogenesis control. This is GTPase Obg from Burkholderia mallei (strain NCTC 10247).